Consider the following 375-residue polypeptide: Trichodiene synthase (375 aa).

Belongs to the trichodiene synthase family.

It catalyses the reaction (2E,6E)-farnesyl diphosphate = trichodiene + diphosphate. It functions in the pathway sesquiterpene biosynthesis; trichothecene biosynthesis. TS is a member of the terpene cyclase group of enzymes. It catalyzes the isomerization and cyclization of farnesyl pyro-phosphate to form trichodiene, the first cyclic intermediate in the biosynthetic pathway for trichothecenes. It serves to branch trichothecene biosynthesis from the isoprenoid pathway. In Gibberella zeae (strain ATCC MYA-4620 / CBS 123657 / FGSC 9075 / NRRL 31084 / PH-1) (Wheat head blight fungus), this protein is Trichodiene synthase (TRI5).